Consider the following 129-residue polypeptide: Succinate dehydrogenase assembly factor 3, mitochondrial (129 aa).

It belongs to the complex I LYR family. SDHAF3 subfamily. Interacts with the iron-sulfur protein subunit within the SDH catalytic dimer.

The protein localises to the mitochondrion matrix. Plays an essential role in the assembly of succinate dehydrogenase (SDH), an enzyme complex (also referred to as respiratory complex II) that is a component of both the tricarboxylic acid (TCA) cycle and the mitochondrial electron transport chain, and which couples the oxidation of succinate to fumarate with the reduction of ubiquinone (coenzyme Q) to ubiquinol. Promotes maturation of the iron-sulfur protein subunit of the SDH catalytic dimer, protecting it from the deleterious effects of oxidants. May act together with SDHAF1. The polypeptide is Succinate dehydrogenase assembly factor 3, mitochondrial (Aspergillus fumigatus (strain ATCC MYA-4609 / CBS 101355 / FGSC A1100 / Af293) (Neosartorya fumigata)).